Consider the following 158-residue polypeptide: SsrA-binding protein (158 aa).

The protein belongs to the SmpB family.

It is found in the cytoplasm. In terms of biological role, required for rescue of stalled ribosomes mediated by trans-translation. Binds to transfer-messenger RNA (tmRNA), required for stable association of tmRNA with ribosomes. tmRNA and SmpB together mimic tRNA shape, replacing the anticodon stem-loop with SmpB. tmRNA is encoded by the ssrA gene; the 2 termini fold to resemble tRNA(Ala) and it encodes a 'tag peptide', a short internal open reading frame. During trans-translation Ala-aminoacylated tmRNA acts like a tRNA, entering the A-site of stalled ribosomes, displacing the stalled mRNA. The ribosome then switches to translate the ORF on the tmRNA; the nascent peptide is terminated with the 'tag peptide' encoded by the tmRNA and targeted for degradation. The ribosome is freed to recommence translation, which seems to be the essential function of trans-translation. The chain is SsrA-binding protein from Parafrankia sp. (strain EAN1pec).